The primary structure comprises 197 residues: Probable S-adenosylmethionine-dependent methyltransferase MJ0882 (197 aa).

S-adenosyl-L-methionine is bound by residues 63-67 (GCGYG), Asp84, and Asn129. 129–132 (NPPI) contacts substrate.

Belongs to the methyltransferase superfamily.

Functionally, probable methyltransferase that uses S-adenosylmethionine as the methyl donor. Binds neither NAD nor NADP in vitro. The chain is Probable S-adenosylmethionine-dependent methyltransferase MJ0882 from Methanocaldococcus jannaschii (strain ATCC 43067 / DSM 2661 / JAL-1 / JCM 10045 / NBRC 100440) (Methanococcus jannaschii).